Reading from the N-terminus, the 914-residue chain is Dynamin-2A (914 aa).

At Met-1 the chain carries N-acetylmethionine. Residues 35–303 form the Dynamin-type G domain; the sequence is PATFLNVVAL…IRSRMKLRLP (269 aa). The G1 motif stretch occupies residues 45 to 52; that stretch reads GNVGAGKS. 45-52 serves as a coordination point for GTP; the sequence is GNVGAGKS. The interval 71-73 is G2 motif; sequence ATR. Residues 143–146 form a G3 motif region; the sequence is DLPG. GTP contacts are provided by residues 143–147 and 204–207; these read DLPGL and GKID. A G4 motif region spans residues 204 to 207; the sequence is GKID. The tract at residues 238–241 is G5 motif; that stretch reads AVIG. A compositionally biased stretch (basic and acidic residues) spans 507–522; sequence RREEELKGRSSKKGQD. Disordered stretches follow at residues 507–570 and 629–648; these read RREE…TAGP and PEDE…NGPD. A compositionally biased stretch (polar residues) spans 523-535; that stretch reads AEQSLLSRATSPQ. Composition is skewed to basic and acidic residues over residues 547–560 and 634–645; these read SMKD…KETP and EKSKSSKDKKAN. The PH domain occupies 572-696; sequence GEITAGYLMK…WINKLQKVIQ (125 aa). In terms of domain architecture, GED spans 730–823; that stretch reads LRWMSQEVRG…QLSIHDNRAA (94 aa). Residues 781 to 805 adopt a coiled-coil conformation; the sequence is NERIESLIQEDQNVKRRRERYQKQS. The tract at residues 821-914 is disordered; that stretch reads RAAAASSYSD…PPPTGSAYRY (94 aa). 2 stretches are compositionally biased toward polar residues: residues 826 to 839 and 852 to 866; these read SSYS…SSPR and AFNS…SLSK.

The protein belongs to the TRAFAC class dynamin-like GTPase superfamily. Dynamin/Fzo/YdjA family. In terms of assembly, binds PtdIns3P. Interacts with SH3P3 (via SH3 domain) and (via C-terminus) with GAMMA-ADR. May homooligomerize or heterooligomerize.

Its subcellular location is the cytoplasm. It localises to the cytosol. The protein localises to the golgi apparatus membrane. The protein resides in the cytoskeleton. It is found in the phragmoplast. Its subcellular location is the cytoplasmic vesicle. It localises to the clathrin-coated vesicle. It catalyses the reaction GTP + H2O = GDP + phosphate + H(+). Increased GTPase activity in the presence of phosphatidic acid. In terms of biological role, microtubule-associated force-producing protein involved in clathrin-mediated vesicle trafficking from the trans-Golgi network to the central vacuole. Able to bind and hydrolyze GTP. Binds specifically to phosphatidylinositol 3-phosphate (PtdIns3P). This Arabidopsis thaliana (Mouse-ear cress) protein is Dynamin-2A (DRP2A).